The primary structure comprises 136 residues: Histone H3 (136 aa).

Residues 1 to 43 (MARTKQTARKSTGGKAPRKQLASKAARKAAPSTGGVKKPHRYK) form a disordered region. Lysine 5 bears the N6,N6,N6-trimethyllysine; alternate mark. Lysine 5 is modified (N6,N6-dimethyllysine; alternate). An N6-methyllysine; alternate mark is found at lysine 5 and lysine 10. N6-acetyllysine; alternate is present on lysine 10. Serine 11 is modified (phosphoserine). Lysine 15 carries the post-translational modification N6,N6-dimethyllysine; alternate. N6-acetyllysine; alternate is present on residues lysine 15, lysine 19, lysine 24, lysine 28, and lysine 37. 4 positions are modified to N6-methyllysine; alternate: lysine 19, lysine 24, lysine 28, and lysine 37. N6,N6,N6-trimethyllysine; alternate occurs at positions 28 and 37. An N6,N6-dimethyllysine; alternate mark is found at lysine 28 and lysine 37. N6-acetyllysine occurs at positions 57 and 65. An N6,N6,N6-trimethyllysine; alternate modification is found at lysine 80. Lysine 80 carries the N6,N6-dimethyllysine; alternate modification. Residue lysine 80 is modified to N6-methyllysine; alternate.

This sequence belongs to the histone H3 family. In terms of assembly, the nucleosome is a histone octamer containing two molecules each of H2A, H2B, H3 and H4 assembled in one H3-H4 heterotetramer and two H2A-H2B heterodimers. The octamer wraps approximately 147 bp of DNA. Post-translationally, phosphorylated to form H3S10ph. H3S10ph promotes subsequent H3K14ac formation and is required for transcriptional activation through TBP recruitment to the promoters. In terms of processing, mono-, di- and trimethylated by the COMPASS complex to form H3K4me1/2/3. H3K4me activates gene expression by regulating transcription elongation and plays a role in telomere length maintenance. H3K4me enrichment correlates with transcription levels, and occurs in a 5' to 3' gradient with H3K4me3 enrichment at the 5'-end of genes, shifting to H3K4me2 and then H3K4me1. Methylated by set2 to form H3K36me. H3K36me represses gene expression. Methylated by dot1 to form H3K79me. H3K79me is required for association of SIR proteins with telomeric regions and for telomeric silencing. The COMPASS-mediated formation of H3K4me2/3 and the dot1-mediated formation of H3K79me require H2BK123ub1. Acetylation of histone H3 leads to transcriptional activation. H3K14ac formation by gcn5 is promoted by H3S10ph. H3K14ac can also be formed by esa1. H3K56ac formation occurs predominantly in newly synthesized H3 molecules during G1, S and G2/M of the cell cycle and may be involved in DNA repair.

It is found in the nucleus. It localises to the chromosome. In terms of biological role, core component of nucleosome. Nucleosomes wrap and compact DNA into chromatin, limiting DNA accessibility to the cellular machineries which require DNA as a template. Histones thereby play a central role in transcription regulation, DNA repair, DNA replication and chromosomal stability. DNA accessibility is regulated via a complex set of post-translational modifications of histones, also called histone code, and nucleosome remodeling. The protein is Histone H3 (hht1) of Neosartorya fischeri (strain ATCC 1020 / DSM 3700 / CBS 544.65 / FGSC A1164 / JCM 1740 / NRRL 181 / WB 181) (Aspergillus fischerianus).